The sequence spans 192 residues: Phosphomevalonate kinase (192 aa).

ATP contacts are provided by residues 17-23 and R141; that span reads KRKSGKD. Position 170 (N170) interacts with substrate. H171 and Q180 together coordinate ATP.

Monomer.

Its subcellular location is the cytoplasm. The protein localises to the cytosol. It carries out the reaction (R)-5-phosphomevalonate + ATP = (R)-5-diphosphomevalonate + ADP. It participates in isoprenoid biosynthesis; isopentenyl diphosphate biosynthesis via mevalonate pathway; isopentenyl diphosphate from (R)-mevalonate: step 2/3. Catalyzes the reversible ATP-dependent phosphorylation of mevalonate 5-phosphate to produce mevalonate diphosphate and ADP, a key step in the mevalonic acid mediated biosynthesis of isopentenyl diphosphate and other polyisoprenoid metabolites. The polypeptide is Phosphomevalonate kinase (Pmvk) (Mus musculus (Mouse)).